Consider the following 233-residue polypeptide: Clathrin light chain (233 aa).

The disordered stretch occupies residues 1–124 (MSEKFPPLED…EDRSEVVDQW (124 aa)). Residues 17–43 (PNDKKDDDTDFLKREAEILGDEFKTEQ) are compositionally biased toward basic and acidic residues. T49 bears the Phosphothreonine mark. A Phosphoserine modification is found at S52. Acidic residues predominate over residues 56–67 (DDDEIRDFEEQF). The segment covering 69-92 (DINSANGAVSSDQNGSATVSSGND) has biased composition (polar residues). Positions 112-124 (SVKEDRSEVVDQW) are enriched in basic and acidic residues. Residues 125–186 (KQRRAVEIHE…EAFLKKRDEF (62 aa)) are a coiled coil. The involved in binding clathrin heavy chain stretch occupies residues 144 to 204 (KELQDEAIKH…DRALQLINQD (61 aa)).

The protein belongs to the clathrin light chain family. Clathrin coats are formed from molecules containing 3 heavy chains and 3 light chains. Interacts with the auxilin-like clathrin uncoating factor SWA2.

It localises to the cytoplasmic vesicle membrane. The protein localises to the membrane. Its subcellular location is the coated pit. In terms of biological role, clathrin is the major protein of the polyhedral coat of coated pits and vesicles. In yeast, it is involved in the retention of proteins in an intracellular membrane compartment, presumably the trans-Golgi. The yeast light chain is important for cell growth. The light chain may help to properly orient the assembly/ disassembly of the clathrin coats. This Saccharomyces cerevisiae (strain ATCC 204508 / S288c) (Baker's yeast) protein is Clathrin light chain (CLC1).